The following is a 218-amino-acid chain: Cytochrome b6 (218 aa).

A helical membrane pass occupies residues 35–55 (IFYCLGGITLVCFLIQFATGF). Cysteine 38 provides a ligand contact to heme c. Residues histidine 89 and histidine 103 each coordinate heme b. Helical transmembrane passes span 93–113 (ASMMVLMLILHVFRVYLTGGF), 119–139 (LTWVTGVTMAVITVSFGVTGY), and 189–209 (LHTFVMPWLLAVFMLMHFLMI). Residues histidine 190 and histidine 205 each coordinate heme b.

It belongs to the cytochrome b family. PetB subfamily. As to quaternary structure, the 4 large subunits of the cytochrome b6-f complex are cytochrome b6, subunit IV (17 kDa polypeptide, PetD), cytochrome f and the Rieske protein, while the 4 small subunits are PetG, PetL, PetM and PetN. The complex functions as a dimer. Requires heme b as cofactor. Heme c is required as a cofactor.

Its subcellular location is the cellular thylakoid membrane. In terms of biological role, component of the cytochrome b6-f complex, which mediates electron transfer between photosystem II (PSII) and photosystem I (PSI), cyclic electron flow around PSI, and state transitions. This is Cytochrome b6 from Synechococcus sp. (strain CC9311).